The chain runs to 278 residues: Serine protease 57 (278 aa).

An N-terminal signal peptide occupies residues 1 to 31 (MVPGTGGGRDCLTLVVATALTQLLWLPGCCG). A Peptidase S1 domain is found at 34–263 (IVGGHEVKPH…FVSWIWDVVR (230 aa)). A disulfide bridge connects residues Cys59 and Cys75. Catalysis depends on charge relay system residues His74 and Asp122. A glycan (N-linked (GlcNAc...) asparagine) is linked at Asn129. Disulfide bonds link Cys157-Cys224, Cys188-Cys202, and Cys214-Cys239. The Charge relay system role is filled by Ser218.

The protein belongs to the peptidase S1 family. In terms of processing, after cleavage of the signal peptide, the N-terminus is probably further processed by CTSC. Processing by CTSC is probably required for accumulation in cytoplasmic granules; in the absence of CTSC the protein does not accumulate. N-glycosylated.

The protein resides in the cytoplasmic granule lumen. The protein localises to the secreted. Its function is as follows. Serine protease that cleaves preferentially after Arg residues. Can also cleave after citrulline (deimidated arginine) and methylarginine residues. This is Serine protease 57 (Prss57) from Rattus norvegicus (Rat).